The primary structure comprises 809 residues: MSSGQSFSHSLLKLPLSALVKGTAIPSNPIDDHHIDINKPIVYALPFRSAVDLLTLQKHALELGLPDPLSPLEIHGKSLKRYVFIASRPTLVQSDNDVPSDSIALFSDLLALHAEDSELDVQVIPATVLWGRKPGKEGNNKPYLQAMNGLQKAKAVITAGRDCLVRFSPVVSLRYMAQSHGTDSSIAHKLARVARIHFSRQKLAASGPDLPSRQVLFARLMKSPAIEQAIEEEAKNKNISMEKARKEAQDIMDEIAADFSYSLVKQGDRLLGWLWNKLYQGLNINNAATVRRLAQDGHEIVYVPCHRSHMDYLLLSYVLYHEGMVPPHIAAGINLNFFPAGPIFRRGGAFFIRRSFKGNRLYSTIFREYLAELFAKGYSVEYFSEGGRSRTGRLLPAKTGMLAMTIQAMLRGLNRPVTLVPVYIGYEHVMEVATYAKELRGKRKEKENAGLVLRTLRKLRNFGLGYVNFGEPIPLNQYLNEHAPEWTKDIDPMGASRPQWINPVVNQLANKMMTHINDAAAANALTLCATALLASRQRALSKDSLIHQIECYLQLLKNVPYSKTYTVPSESAEALVEHAISLDKFVIETDTMGDIISLDRNQSILMTYYRNNIIHLFALPSLIAQMIIRQENLTVSQIQQQVAEIYPFLKAELFLSHKEEELDELVVKVLNELVSQDLISLKEDKVAKNQANTLTLVLLGRTISETLQRYSIAFNLLVSNPELAKADLEQKSQDIAQRLTRLHGINAPEYFDKGVFASLFSTLKQQGYLDSDGNCDGEKTAQFATLLYALLYPEVKLTIEESVFQLKSA.

Residues His306–Asp311 carry the HXXXXD motif motif.

It belongs to the GPAT/DAPAT family.

It localises to the cell inner membrane. The catalysed reaction is sn-glycerol 3-phosphate + an acyl-CoA = a 1-acyl-sn-glycero-3-phosphate + CoA. The protein operates within phospholipid metabolism; CDP-diacylglycerol biosynthesis; CDP-diacylglycerol from sn-glycerol 3-phosphate: step 1/3. In Vibrio vulnificus (strain CMCP6), this protein is Glycerol-3-phosphate acyltransferase.